The sequence spans 521 residues: Maturase K (521 aa).

Belongs to the intron maturase 2 family. MatK subfamily.

It is found in the plastid. Its subcellular location is the chloroplast. Usually encoded in the trnK tRNA gene intron. Probably assists in splicing its own and other chloroplast group II introns. This chain is Maturase K, found in Trillium catesbaei (Catesby's trillium).